The following is a 585-amino-acid chain: MDEIVNIVRDSMWFIPNVFMDNGENDGHVSVNNVCHMYFAFFDVDTSSHLFKLVIKHCDLNKQLKCGMSPLHCYVMNTRFKPSVLKILLHNGVNNFDNKDNKGHIPLHHYLIYSLSIDNKVFDILTDPIDDFSKSSDLLLCYLRYKFNGRLNYYVLYKLLTKGSDPNCVDEDGLTSLHYYCKHISAFHESNYYKSKSYTKMRAEKRFIYTIINHGANINAVTKIGNTPLHTYLQQYTKHSPRVVYALLSRGADTRIRNNFDCTPIMEYIKNDCVTGHILIMLLNWHEQKYGKLQKEEGHHLLYLFIKHNQGYGSHAFNILRYLLDRFDIQKDEYYNTMTPLHTAFQNCNNNVASYLVYIGYDINLPTKDDKTVFDLVFENRNILFNAGVIHNIIHHRLKVSLPMIKSLFYKMLEFSPYDDYYVKKIIAYCILRDESFTELHSKFCLNEDYKSVFMKNISFDKIDSIIKKCNWDISRLKDIQISDTNLYTVLRTEDIRYRTYLKAIHLDSHISFPMYDDLIEQCHLSMERKSKLVDKVLNKLKSTIDGQSRLSYLPPEIIRNIITKLSDYHLNSMLYGKNHYKYYT.

ANK repeat units lie at residues 66 to 98 (CGMS…NFDN), 172 to 220 (DGLT…NINA), 224 to 256 (IGNT…DTRI), 297 to 333 (EGHH…QKDE), and 336 to 365 (NTMT…DINL). Residues 554–571 (LPPEIIRNIITKLSDYHL) are PRANC/F-box-like.

Belongs to the orthopoxvirus OPG003 family.

May be involved in virus-host protein interaction through the ankyrin repeats and PRANC regions. This is Ankyrin repeat protein OPG003 (OPG003) from Homo sapiens (Human).